Reading from the N-terminus, the 124-residue chain is MADDLKRFLYKKLPSVEGLHAIVVSDRDGVPVIKVANDSAPEHALRPGFLSTFALATDQGSKLGLSKNKSIICYYNTYQVVQFNRLPLVVSFIASSSANTGLIVSLEKELAPLFEELIKVVEVS.

The tract at residues 57 to 70 is required for interaction with LAMTOR2; sequence TDQGSKLGLSKNKS.

Belongs to the LAMTOR3 family. In terms of assembly, part of the Ragulator complex composed of LAMTOR1, LAMTOR2, LAMTOR3, LAMTOR4 and LAMTOR5. LAMTOR4 and LAMTOR5 form a heterodimer that interacts, through LAMTOR1, with a LAMTOR2, LAMTOR3 heterodimer. The Ragulator complex interacts with both the mTORC1 complex and heterodimers constituted of the Rag GTPases RagA/RRAGA, RagB/RRAGB, RagC/RRAGC and RagD/RRAGD; regulated by amino acid availability. The Ragulator complex interacts with SLC38A9; the probable amino acid sensor. Interacts with LAMTOR1 and LAMTOR2; the interaction is direct. Component of the lysosomal folliculin complex (LFC), composed of FLCN, FNIP1 (or FNIP2), RagA/RRAGA or RagB/RRAGB GDP-bound, RagC/RRAGC or RagD/RRAGD GTP-bound, and Ragulator. Interacts with MAP2K1/MEK1 and MAPK2. Interacts with MORG1.

It localises to the late endosome membrane. As part of the Ragulator complex it is involved in amino acid sensing and activation of mTORC1, a signaling complex promoting cell growth in response to growth factors, energy levels, and amino acids. Activated by amino acids through a mechanism involving the lysosomal V-ATPase, the Ragulator plays a dual role for the small GTPases Rag (RagA/RRAGA, RagB/RRAGB, RagC/RRAGC and/or RagD/RRAGD): it (1) acts as a guanine nucleotide exchange factor (GEF), activating the small GTPases Rag and (2) mediates recruitment of Rag GTPases to the lysosome membrane. Activated Ragulator and Rag GTPases function as a scaffold recruiting mTORC1 to lysosomes where it is in turn activated. Adapter protein that enhances the efficiency of the MAP kinase cascade facilitating the activation of MAPK2. This chain is Ragulator complex protein LAMTOR3 (Lamtor3), found in Mus musculus (Mouse).